The sequence spans 89 residues: Large ribosomal subunit protein bL27 (89 aa).

A disordered region spans residues M1–G26. Residues N12–G26 are compositionally biased toward basic and acidic residues.

The protein belongs to the bacterial ribosomal protein bL27 family.

The polypeptide is Large ribosomal subunit protein bL27 (Desulforamulus reducens (strain ATCC BAA-1160 / DSM 100696 / MI-1) (Desulfotomaculum reducens)).